We begin with the raw amino-acid sequence, 115 residues long: MPPSTVNQEVNSILFIKNLSFKITAEEMYDLFGRYGPVRQIRLGNTVQTRGTAFVVYENVQDARRACEKLSGYNFMDRYLVVHYYNPERAKVDGQDLAARYAALEQVKQKYGVQL.

An interaction with pre-mRNA branch site region spans residues 9-22 (EVNSILFIKNLSFK). In terms of domain architecture, RRM spans 12–87 (SILFIKNLSF…RYLVVHYYNP (76 aa)).

The protein localises to the nucleus. Functionally, necessary for the splicing of pre-mRNA. The sequence is that of Splicing factor 3B subunit 6-like protein from Schizosaccharomyces pombe (strain 972 / ATCC 24843) (Fission yeast).